We begin with the raw amino-acid sequence, 263 residues long: tRNA pseudouridine synthase A (263 aa).

The active-site Nucleophile is Asp73. Residue Tyr131 participates in substrate binding.

Belongs to the tRNA pseudouridine synthase TruA family. In terms of assembly, homodimer.

The catalysed reaction is uridine(38/39/40) in tRNA = pseudouridine(38/39/40) in tRNA. In terms of biological role, formation of pseudouridine at positions 38, 39 and 40 in the anticodon stem and loop of transfer RNAs. This is tRNA pseudouridine synthase A from Mycoplasmoides gallisepticum (strain R(low / passage 15 / clone 2)) (Mycoplasma gallisepticum).